Consider the following 100-residue polypeptide: Small ribosomal subunit protein uS14c (100 aa).

It belongs to the universal ribosomal protein uS14 family. In terms of assembly, part of the 30S ribosomal subunit.

The protein resides in the plastid. It localises to the chloroplast. Its function is as follows. Binds 16S rRNA, required for the assembly of 30S particles. The sequence is that of Small ribosomal subunit protein uS14c from Nasturtium officinale (Watercress).